Reading from the N-terminus, the 369-residue chain is Histidinol-phosphate aminotransferase (369 aa).

Position 223 is an N6-(pyridoxal phosphate)lysine (Lys223).

This sequence belongs to the class-II pyridoxal-phosphate-dependent aminotransferase family. Histidinol-phosphate aminotransferase subfamily. In terms of assembly, homodimer. The cofactor is pyridoxal 5'-phosphate.

The enzyme catalyses L-histidinol phosphate + 2-oxoglutarate = 3-(imidazol-4-yl)-2-oxopropyl phosphate + L-glutamate. Its pathway is amino-acid biosynthesis; L-histidine biosynthesis; L-histidine from 5-phospho-alpha-D-ribose 1-diphosphate: step 7/9. In Shouchella clausii (strain KSM-K16) (Alkalihalobacillus clausii), this protein is Histidinol-phosphate aminotransferase.